We begin with the raw amino-acid sequence, 83 residues long: Short neurotoxin OKI-Ed (83 aa).

The first 21 residues, 1 to 21 (MKTLLLTLVVVTIVCLDLGYT), serve as a signal peptide directing secretion. 4 cysteine pairs are disulfide-bonded: cysteine 24–cysteine 45, cysteine 38–cysteine 62, cysteine 64–cysteine 75, and cysteine 76–cysteine 81.

It belongs to the three-finger toxin family. Short-chain subfamily. Type I alpha-neurotoxin sub-subfamily. As to expression, expressed by the venom gland.

Its subcellular location is the secreted. Functionally, binds to muscle nicotinic acetylcholine receptor (nAChR) and inhibit acetylcholine from binding to the receptor, thereby impairing neuromuscular transmission. The polypeptide is Short neurotoxin OKI-Ed (Laticauda semifasciata (Black-banded sea krait)).